We begin with the raw amino-acid sequence, 606 residues long: EPM2A-interacting protein 1 (606 aa).

The residue at position 147 (Ser147) is a Phosphoserine.

As to quaternary structure, interacts with EPM2A.

It localises to the endoplasmic reticulum. The protein is EPM2A-interacting protein 1 (Epm2aip1) of Mus musculus (Mouse).